Reading from the N-terminus, the 228-residue chain is Cytochrome c oxidase subunit 2 (228 aa).

The Mitochondrial intermembrane portion of the chain corresponds to 1–26; the sequence is MSTWANLGLQDSASPLMEQLIFFHDH. The helical transmembrane segment at 27–48 threads the bilayer; it reads ALLILVMITVLVGYLMFMLFFN. At 49–62 the chain is on the mitochondrial matrix side; sequence NYVNRFLLHGQLIE. The chain crosses the membrane as a helical span at residues 63 to 82; it reads MIWTILPAIILLFIALPSLR. Residues 83 to 228 lie on the Mitochondrial intermembrane side of the membrane; that stretch reads LLYLLDEINE…FIKWISSNNS (146 aa). The Cu cation site is built by His-161, Cys-196, Glu-198, Cys-200, His-204, and Met-207. Glu-198 contributes to the Mg(2+) binding site.

Belongs to the cytochrome c oxidase subunit 2 family. As to quaternary structure, component of the cytochrome c oxidase (complex IV, CIV), a multisubunit enzyme composed of a catalytic core of 3 subunits and several supernumerary subunits. The complex exists as a monomer or a dimer and forms supercomplexes (SCs) in the inner mitochondrial membrane with ubiquinol-cytochrome c oxidoreductase (cytochrome b-c1 complex, complex III, CIII). It depends on Cu cation as a cofactor.

The protein localises to the mitochondrion inner membrane. The catalysed reaction is 4 Fe(II)-[cytochrome c] + O2 + 8 H(+)(in) = 4 Fe(III)-[cytochrome c] + 2 H2O + 4 H(+)(out). Functionally, component of the cytochrome c oxidase, the last enzyme in the mitochondrial electron transport chain which drives oxidative phosphorylation. The respiratory chain contains 3 multisubunit complexes succinate dehydrogenase (complex II, CII), ubiquinol-cytochrome c oxidoreductase (cytochrome b-c1 complex, complex III, CIII) and cytochrome c oxidase (complex IV, CIV), that cooperate to transfer electrons derived from NADH and succinate to molecular oxygen, creating an electrochemical gradient over the inner membrane that drives transmembrane transport and the ATP synthase. Cytochrome c oxidase is the component of the respiratory chain that catalyzes the reduction of oxygen to water. Electrons originating from reduced cytochrome c in the intermembrane space (IMS) are transferred via the dinuclear copper A center (CU(A)) of subunit 2 and heme A of subunit 1 to the active site in subunit 1, a binuclear center (BNC) formed by heme A3 and copper B (CU(B)). The BNC reduces molecular oxygen to 2 water molecules using 4 electrons from cytochrome c in the IMS and 4 protons from the mitochondrial matrix. The sequence is that of Cytochrome c oxidase subunit 2 (mt:CoII) from Drosophila melanogaster (Fruit fly).